An 89-amino-acid polypeptide reads, in one-letter code: Large ribosomal subunit protein bL27 (89 aa).

Residues 1 to 22 (MAHKKAGGSSRNGRDSAGRRLG) are disordered.

Belongs to the bacterial ribosomal protein bL27 family.

The polypeptide is Large ribosomal subunit protein bL27 (Sphingopyxis alaskensis (strain DSM 13593 / LMG 18877 / RB2256) (Sphingomonas alaskensis)).